The primary structure comprises 196 residues: Large ribosomal subunit protein bL25 (196 aa).

This sequence belongs to the bacterial ribosomal protein bL25 family. CTC subfamily. As to quaternary structure, part of the 50S ribosomal subunit; part of the 5S rRNA/L5/L18/L25 subcomplex. Contacts the 5S rRNA. Binds to the 5S rRNA independently of L5 and L18.

Its function is as follows. This is one of the proteins that binds to the 5S RNA in the ribosome where it forms part of the central protuberance. This chain is Large ribosomal subunit protein bL25, found in Geotalea daltonii (strain DSM 22248 / JCM 15807 / FRC-32) (Geobacter daltonii).